Reading from the N-terminus, the 614-residue chain is Aspartate--tRNA ligase (614 aa).

E174 contacts L-aspartate. Residues 198-201 form an aspartate region; that stretch reads QLFK. Residue R220 participates in L-aspartate binding. ATP-binding positions include 220–222 and Q229; that span reads RDE. H448 provides a ligand contact to L-aspartate. An ATP-binding site is contributed by E482. R489 is an L-aspartate binding site. 534–537 contributes to the ATP binding site; that stretch reads GLDR.

The protein belongs to the class-II aminoacyl-tRNA synthetase family. Type 1 subfamily. Homodimer.

It localises to the cytoplasm. The catalysed reaction is tRNA(Asp) + L-aspartate + ATP = L-aspartyl-tRNA(Asp) + AMP + diphosphate. In terms of biological role, catalyzes the attachment of L-aspartate to tRNA(Asp) in a two-step reaction: L-aspartate is first activated by ATP to form Asp-AMP and then transferred to the acceptor end of tRNA(Asp). The sequence is that of Aspartate--tRNA ligase from Lactobacillus acidophilus (strain ATCC 700396 / NCK56 / N2 / NCFM).